The following is a 417-amino-acid chain: Gamma-glutamyl phosphate reductase (417 aa).

Belongs to the gamma-glutamyl phosphate reductase family.

The protein resides in the cytoplasm. The enzyme catalyses L-glutamate 5-semialdehyde + phosphate + NADP(+) = L-glutamyl 5-phosphate + NADPH + H(+). It participates in amino-acid biosynthesis; L-proline biosynthesis; L-glutamate 5-semialdehyde from L-glutamate: step 2/2. Functionally, catalyzes the NADPH-dependent reduction of L-glutamate 5-phosphate into L-glutamate 5-semialdehyde and phosphate. The product spontaneously undergoes cyclization to form 1-pyrroline-5-carboxylate. This Shigella boydii serotype 18 (strain CDC 3083-94 / BS512) protein is Gamma-glutamyl phosphate reductase.